Here is a 273-residue protein sequence, read N- to C-terminus: 4-hydroxy-tetrahydrodipicolinate reductase (273 aa).

NAD(+)-binding positions include 12 to 17 (GAGGRM) and glutamate 38. Arginine 39 is a binding site for NADP(+). NAD(+)-binding positions include 102–104 (GTT) and 126–129 (AANF). Histidine 159 (proton donor/acceptor) is an active-site residue. Histidine 160 contributes to the (S)-2,3,4,5-tetrahydrodipicolinate binding site. The active-site Proton donor is the lysine 163. 169–170 (GT) is a (S)-2,3,4,5-tetrahydrodipicolinate binding site.

Belongs to the DapB family. Homotetramer.

It is found in the cytoplasm. It catalyses the reaction (S)-2,3,4,5-tetrahydrodipicolinate + NAD(+) + H2O = (2S,4S)-4-hydroxy-2,3,4,5-tetrahydrodipicolinate + NADH + H(+). The catalysed reaction is (S)-2,3,4,5-tetrahydrodipicolinate + NADP(+) + H2O = (2S,4S)-4-hydroxy-2,3,4,5-tetrahydrodipicolinate + NADPH + H(+). It participates in amino-acid biosynthesis; L-lysine biosynthesis via DAP pathway; (S)-tetrahydrodipicolinate from L-aspartate: step 4/4. Its function is as follows. Catalyzes the conversion of 4-hydroxy-tetrahydrodipicolinate (HTPA) to tetrahydrodipicolinate. The chain is 4-hydroxy-tetrahydrodipicolinate reductase from Escherichia fergusonii (strain ATCC 35469 / DSM 13698 / CCUG 18766 / IAM 14443 / JCM 21226 / LMG 7866 / NBRC 102419 / NCTC 12128 / CDC 0568-73).